Here is a 272-residue protein sequence, read N- to C-terminus: Formamidopyrimidine-DNA glycosylase (272 aa).

Catalysis depends on P2, which acts as the Schiff-base intermediate with DNA. The active-site Proton donor is the E3. Residue K56 is the Proton donor; for beta-elimination activity of the active site. DNA-binding residues include H89, R108, and K149. An FPG-type zinc finger spans residues 234-268 (LAYGRAGEMCVNCETPLENLKLGQRASVFCPQCQP). Residue R258 is the Proton donor; for delta-elimination activity of the active site.

Belongs to the FPG family. In terms of assembly, monomer. Requires Zn(2+) as cofactor.

It catalyses the reaction Hydrolysis of DNA containing ring-opened 7-methylguanine residues, releasing 2,6-diamino-4-hydroxy-5-(N-methyl)formamidopyrimidine.. The enzyme catalyses 2'-deoxyribonucleotide-(2'-deoxyribose 5'-phosphate)-2'-deoxyribonucleotide-DNA = a 3'-end 2'-deoxyribonucleotide-(2,3-dehydro-2,3-deoxyribose 5'-phosphate)-DNA + a 5'-end 5'-phospho-2'-deoxyribonucleoside-DNA + H(+). Its function is as follows. Involved in base excision repair of DNA damaged by oxidation or by mutagenic agents. Acts as a DNA glycosylase that recognizes and removes damaged bases. Has a preference for oxidized purines, such as 7,8-dihydro-8-oxoguanine (8-oxoG). Has AP (apurinic/apyrimidinic) lyase activity and introduces nicks in the DNA strand. Cleaves the DNA backbone by beta-delta elimination to generate a single-strand break at the site of the removed base with both 3'- and 5'-phosphates. The sequence is that of Formamidopyrimidine-DNA glycosylase from Acinetobacter baylyi (strain ATCC 33305 / BD413 / ADP1).